Reading from the N-terminus, the 163-residue chain is MIALFVLMGLMAAASASSCCSSEDRANVMHNWDAAWSAAYSDRRVALAQAVFASLFSRDAAAQGLFSGVSADNPDSADFRAHCVRVVNGLDVAINMLNDPAVLNEQLAHLSAQHQARAGVAAAHFDVMAEAFAEVMPQVSSCFSSDSWNRCFARIANGISAGL.

A signal peptide spans 1-16 (MIALFVLMGLMAAASA). One can recognise a Globin domain in the interval 19–163 (CCSSEDRANV…RIANGISAGL (145 aa)). An intrachain disulfide couples Cys-20 to Cys-151. Cys-83 is a hydrogen sulfide binding site. His-114 contacts heme b.

Belongs to the globin family. In terms of assembly, the 400 kDa hemoglobin consists of a spherical 24-mer arranged as a double layer of dome-shaped dodecamers. Each dodecamer is composed of the 3-fold trimer of the tetramer A1-A2-B1-B2 having one intra-tetramer (A1-B2) disulfide bond and one inter-tetramer (B1-B2) disulfide bond per tetramer.

It localises to the secreted. Its function is as follows. The extracellular giant hemoglobin is able to bind and transport oxygen and hydrosulfide simultaneously and reversibly at two different sites. This chain is Extracellular giant hemoglobin major globin subunit B2 (ghbB2), found in Oligobrachia mashikoi (Beard worm).